Reading from the N-terminus, the 180-residue chain is Large ribosomal subunit protein uL6 (180 aa).

It belongs to the universal ribosomal protein uL6 family. In terms of assembly, part of the 50S ribosomal subunit.

Functionally, this protein binds to the 23S rRNA, and is important in its secondary structure. It is located near the subunit interface in the base of the L7/L12 stalk, and near the tRNA binding site of the peptidyltransferase center. This chain is Large ribosomal subunit protein uL6, found in Protochlamydia amoebophila (strain UWE25).